A 254-amino-acid polypeptide reads, in one-letter code: MAAPLRHTLLKLVPTLLRSSYVAQVPLQTLCTRGPPEEDAPSSLPVSPYESEPWKYLDSEEYHNRYGSRPVWADYRRNHKGGVPPQRTRKTCIRNNKVAGNPCPICRDHKLHVDFRNVKLLEQFVCAHTGIIFHAPYTGVCMKQHKKLTQAIQKARECGLLSYYVPQVEPRDADFGTVHGAVSVTPPAPTLLSGEPWYPWYSWQQPPERELSRLRRLYQGNLLEESGPPPESMPEMPTTPPAESSIEQPGSQSA.

The N-terminal 33 residues, 1–33 (MAAPLRHTLLKLVPTLLRSSYVAQVPLQTLCTR), are a transit peptide targeting the mitochondrion. Ser-47 is subject to Phosphoserine. The tract at residues 218-254 (YQGNLLEESGPPPESMPEMPTTPPAESSIEQPGSQSA) is disordered. The segment covering 227 to 240 (GPPPESMPEMPTTP) has biased composition (pro residues).

The protein belongs to the bacterial ribosomal protein bS18 family. Mitochondrion-specific ribosomal protein mS40 subfamily. As to quaternary structure, component of the mitochondrial ribosome small subunit (28S) which comprises a 12S rRNA and about 30 distinct proteins.

It is found in the mitochondrion. This Mus musculus (Mouse) protein is Small ribosomal subunit protein mS40 (Mrps18b).